The chain runs to 1229 residues: Vacuolar protein sorting-associated protein 8 homolog (1229 aa).

Positions 67–89 (EFGMPVPHATPTPSIGEDSTIRT) are disordered. Residues 901 to 1063 (ETTRLLSLHY…ILPHQELQSI (163 aa)) form a CHCR repeat. The segment at 1148–1189 (CSMCRQRLYDHSQVLIFGGCGHGIHEQCMEESETQFEECPRC) adopts an RING-type; atypical zinc-finger fold.

This sequence belongs to the VPS8 family. Component of the class C core vacuole/endosome tethering (CORVET) complex composed of at least Vps8, dor/Vps18, car/Vps33A and Vps16A; unlike in other species, Vps11 is not part of the Drosophila complex. Due to the reduced number of components the Drosophila CORVET complex is often referred to as the miniCORVET complex. Has a higher affinity than the homotypic fusion and vacuole protein sorting (HOPS) tethering complex-specific component lt/Vps41 for Vps16A, car/Vps33A and dor/Vps18, the core components shared by both tethering complexes.

It is found in the early endosome. Its function is as follows. Part of the class C core vacuole/endosome tethering (CORVET) complex involved in endo-lysosomal vesicle trafficking and lysosome biogenesis by facilitating docking and fusion of endosomal vesicles. The CORVET complex acts upstream of the homotypic fusion and vacuole protein sorting (HOPS) tethering complex but is not involved in autophagic flux. The CORVET complex may cooperate with the early endosomal tether Rbsn-5 to mediate endosomal fusion. As part of the CORVET complex recruited to endosomes by activated GTP-bound Rab5. Specifically required for endocytic trafficking in a subset of cells, such as hemocytes and nephrocytes, which are highly active in endocytosis. In Drosophila melanogaster (Fruit fly), this protein is Vacuolar protein sorting-associated protein 8 homolog.